We begin with the raw amino-acid sequence, 117 residues long: Ribonuclease P protein component (117 aa).

It belongs to the RnpA family. As to quaternary structure, consists of a catalytic RNA component (M1 or rnpB) and a protein subunit.

It catalyses the reaction Endonucleolytic cleavage of RNA, removing 5'-extranucleotides from tRNA precursor.. In terms of biological role, RNaseP catalyzes the removal of the 5'-leader sequence from pre-tRNA to produce the mature 5'-terminus. It can also cleave other RNA substrates such as 4.5S RNA. The protein component plays an auxiliary but essential role in vivo by binding to the 5'-leader sequence and broadening the substrate specificity of the ribozyme. The chain is Ribonuclease P protein component from Staphylococcus aureus (strain bovine RF122 / ET3-1).